The sequence spans 684 residues: Glycine--tRNA ligase beta subunit (684 aa).

The protein belongs to the class-II aminoacyl-tRNA synthetase family. In terms of assembly, tetramer of two alpha and two beta subunits.

The protein localises to the cytoplasm. The catalysed reaction is tRNA(Gly) + glycine + ATP = glycyl-tRNA(Gly) + AMP + diphosphate. The chain is Glycine--tRNA ligase beta subunit from Pseudomonas fluorescens (strain SBW25).